The following is a 148-amino-acid chain: Large ribosomal subunit protein bL9 (148 aa).

This sequence belongs to the bacterial ribosomal protein bL9 family.

In terms of biological role, binds to the 23S rRNA. This Methylobacillus flagellatus (strain ATCC 51484 / DSM 6875 / VKM B-1610 / KT) protein is Large ribosomal subunit protein bL9.